Here is a 65-residue protein sequence, read N- to C-terminus: Large ribosomal subunit protein uL29 (65 aa).

Belongs to the universal ribosomal protein uL29 family.

The chain is Large ribosomal subunit protein uL29 from Dehalococcoides mccartyi (strain ATCC BAA-2100 / JCM 16839 / KCTC 5957 / BAV1).